A 301-amino-acid polypeptide reads, in one-letter code: UDP-N-acetylenolpyruvoylglucosamine reductase 1 (301 aa).

The 168-residue stretch at 29–196 (KIGGPADILI…LEAEFQLQIG (168 aa)) folds into the FAD-binding PCMH-type domain. Residue arginine 174 is part of the active site. The active-site Proton donor is serine 225. The active site involves glutamate 295.

The protein belongs to the MurB family. It depends on FAD as a cofactor.

Its subcellular location is the cytoplasm. It carries out the reaction UDP-N-acetyl-alpha-D-muramate + NADP(+) = UDP-N-acetyl-3-O-(1-carboxyvinyl)-alpha-D-glucosamine + NADPH + H(+). It functions in the pathway cell wall biogenesis; peptidoglycan biosynthesis. Its function is as follows. Cell wall formation. This is UDP-N-acetylenolpyruvoylglucosamine reductase 1 (murB1) from Bacillus anthracis.